Here is a 475-residue protein sequence, read N- to C-terminus: Ribulose bisphosphate carboxylase large chain (475 aa).

Residues 1-2 constitute a propeptide that is removed on maturation; that stretch reads MS. Pro3 is subject to N-acetylproline. An N6,N6,N6-trimethyllysine modification is found at Lys14. Substrate-binding residues include Asn123 and Thr173. Lys175 serves as the catalytic Proton acceptor. A substrate-binding site is contributed by Lys177. Mg(2+)-binding residues include Lys201, Asp203, and Glu204. At Lys201 the chain carries N6-carboxylysine. His294 acts as the Proton acceptor in catalysis. 3 residues coordinate substrate: Arg295, His327, and Ser379.

Belongs to the RuBisCO large chain family. Type I subfamily. Heterohexadecamer of 8 large chains and 8 small chains; disulfide-linked. The disulfide link is formed within the large subunit homodimers. Mg(2+) serves as cofactor. In terms of processing, the disulfide bond which can form in the large chain dimeric partners within the hexadecamer appears to be associated with oxidative stress and protein turnover.

It is found in the plastid. The protein localises to the chloroplast. The enzyme catalyses 2 (2R)-3-phosphoglycerate + 2 H(+) = D-ribulose 1,5-bisphosphate + CO2 + H2O. The catalysed reaction is D-ribulose 1,5-bisphosphate + O2 = 2-phosphoglycolate + (2R)-3-phosphoglycerate + 2 H(+). Its function is as follows. RuBisCO catalyzes two reactions: the carboxylation of D-ribulose 1,5-bisphosphate, the primary event in carbon dioxide fixation, as well as the oxidative fragmentation of the pentose substrate in the photorespiration process. Both reactions occur simultaneously and in competition at the same active site. This Pinus balfouriana (Foxtail pine) protein is Ribulose bisphosphate carboxylase large chain.